Consider the following 283-residue polypeptide: Ribosome biogenesis GTPase A (283 aa).

In terms of domain architecture, CP-type G spans 14-178 (RREVTEKLKL…LLDTPGILWP (165 aa)). GTP contacts are provided by residues 58 to 61 (NKAD), 86 to 87 (NS), 130 to 135 (NVGKST), and G174.

This sequence belongs to the TRAFAC class YlqF/YawG GTPase family. MTG1 subfamily. Interacts with ctc. Interacts with the immature 50S ribosome subunit. 2 molecules of rbgA bind to one 50S subunit.

It is found in the cytoplasm. Functionally, essential protein that is required for a late step of 50S ribosomal subunit assembly. Has GTPase activity that is stimulated by interaction with the immature 50S ribosome subunit. Binds to the 23S rRNA. Required for the association of ribosomal proteins rplP and rpmA with the large subunit. This chain is Ribosome biogenesis GTPase A, found in Bacillus licheniformis (strain ATCC 14580 / DSM 13 / JCM 2505 / CCUG 7422 / NBRC 12200 / NCIMB 9375 / NCTC 10341 / NRRL NRS-1264 / Gibson 46).